The sequence spans 562 residues: Glutamate--tRNA ligase (562 aa).

Residues 90–100 carry the 'HIGH' region motif; sequence PNPSGLLHIGH.

Belongs to the class-I aminoacyl-tRNA synthetase family. Glutamate--tRNA ligase type 2 subfamily.

The protein resides in the cytoplasm. It catalyses the reaction tRNA(Glu) + L-glutamate + ATP = L-glutamyl-tRNA(Glu) + AMP + diphosphate. Its function is as follows. Catalyzes the attachment of glutamate to tRNA(Glu) in a two-step reaction: glutamate is first activated by ATP to form Glu-AMP and then transferred to the acceptor end of tRNA(Glu). The sequence is that of Glutamate--tRNA ligase from Nanoarchaeum equitans (strain Kin4-M).